The primary structure comprises 504 residues: Maturase K (504 aa).

It belongs to the intron maturase 2 family. MatK subfamily.

The protein resides in the plastid. The protein localises to the chloroplast. Its function is as follows. Usually encoded in the trnK tRNA gene intron. Probably assists in splicing its own and other chloroplast group II introns. In Barbarea vulgaris (Yellow rocket), this protein is Maturase K.